Reading from the N-terminus, the 415-residue chain is 8-amino-7-oxononanoate synthase (415 aa).

Arg21 provides a ligand contact to substrate. Gly117 to Tyr118 is a pyridoxal 5'-phosphate binding site. His149 provides a ligand contact to substrate. Residues Ser195, His223, and Thr251 each coordinate pyridoxal 5'-phosphate. Lys254 is modified (N6-(pyridoxal phosphate)lysine). Residue Thr374 coordinates substrate.

It belongs to the class-II pyridoxal-phosphate-dependent aminotransferase family. BioF subfamily. Homodimer. Pyridoxal 5'-phosphate serves as cofactor.

It carries out the reaction 6-carboxyhexanoyl-[ACP] + L-alanine + H(+) = (8S)-8-amino-7-oxononanoate + holo-[ACP] + CO2. It functions in the pathway cofactor biosynthesis; biotin biosynthesis. Functionally, catalyzes the decarboxylative condensation of pimeloyl-[acyl-carrier protein] and L-alanine to produce 8-amino-7-oxononanoate (AON), [acyl-carrier protein], and carbon dioxide. In Ralstonia pickettii (strain 12J), this protein is 8-amino-7-oxononanoate synthase.